A 289-amino-acid polypeptide reads, in one-letter code: MKTLYILDGSSFVYRSFFALPPLSTSKGFPTNAIYGFLRMLFSLIKKERPQYLVVVFDAPAKTKREKIYADYKKQRPKAPDPLKVQIPVIKEILKLAGIPLLELPGYEADDVIAYLAEKFSQKGFKVKIYSPDKDLLQLVSENVLVINPMNDEVFTKERVIKKFGVEPQKIPDYLALVGDKVDNVPGIEGVGPKTAINILKKYGSVENILKNWEKFQREFPRAKKEDLELSYKLVKLYTDLDIELSEEDLKIKRPDLNKLKQKLQELEMKSLLKEVDKIFRQASQRSLF.

In terms of domain architecture, 5'-3' exonuclease spans 166–256 (VEPQKIPDYL…EEDLKIKRPD (91 aa)).

In terms of biological role, 5'-3' exonuclease acting preferentially on double-stranded DNA. The chain is 5'-3' exonuclease from Aquifex aeolicus (strain VF5).